The sequence spans 1097 residues: FHIP family protein GK23746 (1097 aa).

A compositionally biased stretch (polar residues) spans M1–N21. Residues M1–P25 form a disordered region. A Phosphoserine modification is found at S491. 3 disordered regions span residues D639–R684, N820–Y856, and N932–V1042. Residues S641–G654 are compositionally biased toward low complexity. S823 is subject to Phosphoserine. 2 stretches are compositionally biased toward low complexity: residues P824–Q852 and N932–S948. Positions A949–H962 are enriched in polar residues. Low complexity predominate over residues T973–T985. Over residues A986–G995 the composition is skewed to gly residues. Low complexity-rich tracts occupy residues S996–T1006 and S1013–T1022.

The protein belongs to the FHIP family.

The chain is FHIP family protein GK23746 from Drosophila willistoni (Fruit fly).